A 371-amino-acid polypeptide reads, in one-letter code: N-acetyllactosaminide alpha-2,3-sialyltransferase (371 aa).

Position 255 (glycine 255) interacts with CMP-N-acetyl-beta-neuraminate. Aspartate 258 serves as the catalytic Proton acceptor. CMP-N-acetyl-beta-neuraminate is bound by residues 278–282 (APHPR), 299–300 (IE), and 322–323 (SG). Histidine 280 (proton donor) is an active-site residue.

It belongs to the glycosyltransferase 52 family. As to quaternary structure, homodimer.

Its subcellular location is the cell outer membrane. The catalysed reaction is a beta-D-galactosyl-(1-&gt;4)-N-acetyl-beta-D-glucosaminyl derivative + CMP-N-acetyl-beta-neuraminate = an N-acetyl-alpha-neuraminyl-(2-&gt;3)-beta-D-galactosyl-(1-&gt;4)-N-acetyl-beta-D-glucosaminyl derivative + CMP + H(+). Its pathway is bacterial outer membrane biogenesis; lipooligosaccharide biosynthesis. Functionally, catalyzes the transfer of sialic acid from the substrate CMP-N-acetylneuraminate to the terminal galactose residue of the lacto-N-neotetraose branch of surface lipooligosaccharide (LOS), forming an alpha-2,3-sialyl linkage. Thus, functions in the sialylation of LOS, which plays a role in the evasion of the host immune response by protecting N.meningitidis from complement-mediated serum killing and from phagocytic killing by neutrophils. The sequence is that of N-acetyllactosaminide alpha-2,3-sialyltransferase from Neisseria meningitidis serogroup A / serotype 4A (strain DSM 15465 / Z2491).